Here is a 1026-residue protein sequence, read N- to C-terminus: SWI/SNF-related matrix-associated actin-dependent regulator of chromatin subfamily A containing DEAD/H box 1 (1026 aa).

N-acetylmethionine is present on Met1. The segment at 1–82 is disordered; it reads MNLFNLDRFR…DNERKASISY (82 aa). Positions 7-19 are enriched in basic and acidic residues; sequence DRFRFEKRNKIEE. Thr54 carries the post-translational modification Phosphothreonine. Residue Ser57 is modified to Phosphoserine. A Phosphothreonine modification is found at Thr71. Residue Lys77 forms a Glycyl lysine isopeptide (Lys-Gly) (interchain with G-Cter in SUMO2) linkage. Ser79 carries the post-translational modification Phosphoserine. Lys84 participates in a covalent cross-link: Glycyl lysine isopeptide (Lys-Gly) (interchain with G-Cter in SUMO2). Residues Ser124, Ser127, Ser132, Ser146, and Ser152 each carry the phosphoserine modification. A CUE 1 domain is found at 157–199; sequence LKDAKLQTLKELFPQRSDNDLLKLIESTSTMDGAIAAALLMFG. 2 disordered regions span residues 203–251 and 302–328; these read GGPR…NWEK and SQSEVPNGKEVSSRSQNYPKNATKTKL. A phosphoserine mark is found at Ser211 and Ser214. Phosphotyrosine is present on Tyr217. Positions 226–238 are enriched in basic and acidic residues; sequence QSIKKTRLDHGEE. Phosphoserine is present on residues Ser239 and Ser242. In terms of domain architecture, CUE 2 spans 251-294; sequence KQESIVLKLQKEFPNFDKQELREVLKEHEWMYTEALESLKVFAE. Ser302 is subject to Phosphoserine. A compositionally biased stretch (polar residues) spans 314 to 323; sequence SRSQNYPKNA. Lys335 is covalently cross-linked (Glycyl lysine isopeptide (Lys-Gly) (interchain with G-Cter in SUMO2)). Residues 354–373 form a disordered region; that stretch reads VVEDSEYDSGSDVGSSLDED. Lys471 participates in a covalent cross-link: Glycyl lysine isopeptide (Lys-Gly) (interchain with G-Cter in SUMO2). Residues 509-677 form the Helicase ATP-binding domain; the sequence is ALVHKHGLNG…MSLLNFVMPH (169 aa). 521–529 serves as a coordination point for ATP; the sequence is ADEMGLGKT. The DEGH box signature appears at 628–631; sequence DEGH. Positions 721–738 match the Nuclear localization signal motif; that stretch reads RRVKEEVLKQLPPKKDRI. A Glycyl lysine isopeptide (Lys-Gly) (interchain with G-Cter in SUMO2) cross-link involves residue Lys724. One can recognise a Helicase C-terminal domain in the interval 858–1010; sequence VLGCILSELK…MTTVDEGDEG (153 aa). 897–904 contributes to the ATP binding site; sequence YLRLDGKT. Lys996 is covalently cross-linked (Glycyl lysine isopeptide (Lys-Gly) (interchain with G-Cter in SUMO2)). A DEGD box motif is present at residues 1005-1008; the sequence is DEGD.

Belongs to the SNF2/RAD54 helicase family. In terms of assembly, binds to DNA preferentially in the vicinity of transcriptional start sites. Interacts with MSH2 and TRIM28. Part of a complex composed of TRIM28, HDAC1, HDAC2 and EHMT2. Interacts with PCNA. In terms of tissue distribution, isoform 1 is expressed ubiquitously. Isoform 3 is expressed mainly in skin and esophagus. Expressed in fibroblasts and keratinocytes (at protein level).

The protein localises to the nucleus. The protein resides in the chromosome. It carries out the reaction ATP + H2O = ADP + phosphate + H(+). Its function is as follows. DNA helicase that possesses intrinsic ATP-dependent nucleosome-remodeling activity and is both required for DNA repair and heterochromatin organization. Promotes DNA end resection of double-strand breaks (DSBs) following DNA damage: probably acts by weakening histone DNA interactions in nucleosomes flanking DSBs. Required for the restoration of heterochromatin organization after replication. Acts at replication sites to facilitate the maintenance of heterochromatin by directing H3 and H4 histones deacetylation, H3 'Lys-9' trimethylation (H3K9me3) and restoration of silencing. The protein is SWI/SNF-related matrix-associated actin-dependent regulator of chromatin subfamily A containing DEAD/H box 1 of Homo sapiens (Human).